A 54-amino-acid chain; its full sequence is UPF0391 membrane protein msr3702 (54 aa).

The next 2 helical transmembrane spans lie at 4–24 and 30–50; these read WALV…GGIA and IAQI…LAGL.

This sequence belongs to the UPF0391 family.

It localises to the cell membrane. In Mesorhizobium japonicum (strain LMG 29417 / CECT 9101 / MAFF 303099) (Mesorhizobium loti (strain MAFF 303099)), this protein is UPF0391 membrane protein msr3702.